A 421-amino-acid polypeptide reads, in one-letter code: Prenyltransferase asqH2 (421 aa).

Residues M1–K28 are disordered. E105 provides a ligand contact to L-tryptophan. Positions 119, 272, 274, 276, and 341 each coordinate substrate.

This sequence belongs to the tryptophan dimethylallyltransferase family.

It carries out the reaction yaequinolone E + dimethylallyl diphosphate + H2O = [(1'E)-3'-hydroxy-3',7'-dimethylocta-1',6'-dien-1'-yl]-quinolinone B + diphosphate. It functions in the pathway secondary metabolite biosynthesis. The protein operates within alkaloid biosynthesis. It participates in mycotoxin biosynthesis. Its function is as follows. Prenyltransferase; part of the gene cluster that mediates the biosynthesis of the aspoquinolone mycotoxins. Within the pathway, the prenyltransferase asqH2 performs the second alkylation with DMAPP at delta(3') double bond to yield a carbenium ion intermediate, which can be attacked by H(2)O to yield a styrenyl quinolone containing a C3'-hydroxyprenyl chain. The first step of the pathway is catalyzed by the nonribosomal peptide synthetase asqK that condenses anthranilic acid and O-methyl-L-tyrosine to produce 4'-methoxycyclopeptin. 4'-methoxycyclopeptin is then converted to 4'-methoxydehydrocyclopeptin by the ketoglutarate-dependent dioxygenase asqJ. AsqJ also converts its first product 4'-methoxydehydrocyclopeptin to 4'-methoxycyclopenin. The following conversion of 4'-methoxycyclopenin into 4'-methoxyviridicatin is catalyzed by the cyclopenase asqI. 4'-methoxyviridicatin is the precursor of quinolone natural products, and is further converted to quinolinone B. The prenyltransferase asqH1 then catalyzes the canonical Friedel-Crafts alkylation of quinolinone B with dimethylallyl cation to yield dimethylallyl quinolone, which is subjected to FAD-dependent dehydrogenation by the FAD-linked oxidoreductase asqF to yield conjugated aryl diene. The delta(3') double bond then serves as the site of the second alkylation with DMAPP catalyzed by the prenyltransferase asqH2 to yield a carbenium ion intermediate, which can be attacked by H(2)O to yield a styrenyl quinolone containing a C3'-hydroxyprenyl chain. The FAD-dependent monooxygenase asqG performs epoxidation of the terminal C7'-C8' olefin. Finally, after dehydratation of the epoxide at C3 by asqC, the quinolone epoxide rearrangement protein asqO catalyzes an enzymatic 3-exo-tet cyclization to yield the cyclopropyl-THF ring system in aspoquinolone. This chain is Prenyltransferase asqH2, found in Emericella nidulans (strain FGSC A4 / ATCC 38163 / CBS 112.46 / NRRL 194 / M139) (Aspergillus nidulans).